Reading from the N-terminus, the 230-residue chain is Transmembrane 4 L6 family member 20 (230 aa).

Over Met-1–Asn-11 the chain is Lumenal. The helical transmembrane segment at Gly-12 to Leu-32 threads the bilayer. Residues Asn-33–Pro-44 are Cytoplasmic-facing. The chain crosses the membrane as a helical span at residues Ile-45–Ala-65. The Lumenal portion of the chain corresponds to Thr-66–Gly-83. A helical membrane pass occupies residues Met-84–Val-104. Topologically, residues Ser-105–Arg-185 are cytoplasmic. The chain crosses the membrane as a helical span at residues Ile-186–Gly-206. Over Leu-207–Val-230 the chain is Lumenal.

It belongs to the L6 tetraspanin family. Post-translationally, glycosylated at Asn-132 in presence of ceramide which inverts the orientation of TM4SF20 in membranes exposing these residues to the endoplasmic reticulum lumen. In terms of processing, cleaved by signal peptidase at Ser-14 but the peptide does not act as a signal peptide. Cleavage is inhibited by ceramide which inverts the orientation of TM4SF20 in membranes exposing the N-terminus to the cytosol and not to the endoplasmic reticulum lumen.

It localises to the membrane. The protein resides in the endoplasmic reticulum membrane. Functionally, polytopic transmembrane protein. Inhibits regulated intramembrane proteolysis (RIP) of CREB3L1, inhibiting its activation and the induction of collagen synthesis. In response to ceramide, which alters TM4SF20 membrane topology, stimulates RIP activation of CREB3L1. Ceramide reverses the direction through which transmembrane helices are translocated into the endoplasmic reticulum membrane during translation of TM4SF20, this mechanism is called 'regulated alternative translocation' (RAT) and regulates the function of the transmembrane protein. This chain is Transmembrane 4 L6 family member 20 (TM4SF20), found in Bos taurus (Bovine).